The sequence spans 134 residues: ATP synthase epsilon chain (134 aa).

It belongs to the ATPase epsilon chain family. As to quaternary structure, F-type ATPases have 2 components, CF(1) - the catalytic core - and CF(0) - the membrane proton channel. CF(1) has five subunits: alpha(3), beta(3), gamma(1), delta(1), epsilon(1). CF(0) has three main subunits: a, b and c.

It localises to the cell inner membrane. In terms of biological role, produces ATP from ADP in the presence of a proton gradient across the membrane. The protein is ATP synthase epsilon chain of Syntrophobacter fumaroxidans (strain DSM 10017 / MPOB).